The following is a 436-amino-acid chain: Putative permease MJ0326 (436 aa).

Transmembrane regions (helical) follow at residues 24 to 44 (LAGI…PQIL), 51 to 71 (FGAV…VMGL), 79 to 99 (LAPG…GMGI), 103 to 123 (VALG…LTKI), 139 to 159 (TAVG…GIIV), 171 to 191 (LMEP…ILVS), 194 to 214 (VIGA…ILGI), 235 to 255 (LDIM…FFFV), 322 to 342 (GFVS…YPVV), 345 to 365 (IPPY…MRSV), 381 to 401 (ITLL…LGFI), and 416 to 436 (VHWL…YLSG).

Belongs to the nucleobase:cation symporter-2 (NCS2) (TC 2.A.40) family. Azg-like subfamily.

The protein resides in the cell membrane. This chain is Putative permease MJ0326, found in Methanocaldococcus jannaschii (strain ATCC 43067 / DSM 2661 / JAL-1 / JCM 10045 / NBRC 100440) (Methanococcus jannaschii).